We begin with the raw amino-acid sequence, 296 residues long: 3-methyl-2-oxobutanoate hydroxymethyltransferase (296 aa).

Low complexity predominate over residues 1–14 (MTAPTPTPANAATP). Residues 1–29 (MTAPTPTPANAATPYGTLPPASPLPQRRP) form a disordered region. Mg(2+)-binding residues include D71 and D114. 3-methyl-2-oxobutanoate contacts are provided by residues 71-72 (DS), D114, and K143. E145 is a binding site for Mg(2+). Residue E212 is the Proton acceptor of the active site.

It belongs to the PanB family. As to quaternary structure, homodecamer; pentamer of dimers. The cofactor is Mg(2+).

It is found in the cytoplasm. It catalyses the reaction 3-methyl-2-oxobutanoate + (6R)-5,10-methylene-5,6,7,8-tetrahydrofolate + H2O = 2-dehydropantoate + (6S)-5,6,7,8-tetrahydrofolate. It participates in cofactor biosynthesis; (R)-pantothenate biosynthesis; (R)-pantoate from 3-methyl-2-oxobutanoate: step 1/2. Its function is as follows. Catalyzes the reversible reaction in which hydroxymethyl group from 5,10-methylenetetrahydrofolate is transferred onto alpha-ketoisovalerate to form ketopantoate. The protein is 3-methyl-2-oxobutanoate hydroxymethyltransferase of Paracidovorax citrulli (strain AAC00-1) (Acidovorax citrulli).